A 460-amino-acid chain; its full sequence is Cysteine--tRNA ligase (460 aa).

Cys28 contacts Zn(2+). The short motif at 30-40 (NTVYDFCHIGH) is the 'HIGH' region element. Zn(2+) contacts are provided by Cys209, His234, and Glu238. The 'KMSKS' region motif lies at 266 to 270 (KMSKS). Lys269 lines the ATP pocket.

It belongs to the class-I aminoacyl-tRNA synthetase family. Monomer. Zn(2+) serves as cofactor.

The protein resides in the cytoplasm. It carries out the reaction tRNA(Cys) + L-cysteine + ATP = L-cysteinyl-tRNA(Cys) + AMP + diphosphate. The chain is Cysteine--tRNA ligase from Marinomonas sp. (strain MWYL1).